Reading from the N-terminus, the 625-residue chain is Tyrosine-protein kinase ITK/TSK (625 aa).

A PH domain is found at 4–117; it reads FILLEEQLIK…WVLTLKEETR (114 aa). A Btk-type zinc finger spans residues 119-155; it reads NNSLVSKYHPNFWMDGRWRCCSQLEKPAVGCAPYDPS. Residues His-127, Cys-138, Cys-139, and Cys-149 each contribute to the Zn(2+) site. Residues 153–174 form a disordered region; it reads DPSKNASKKPLPPTPEDNRRSF. In terms of domain architecture, SH3 spans 177–237; sequence PEETLVIALY…PSSYLVEKSP (61 aa). Position 186 is a phosphotyrosine; by autocatalysis (Tyr-186). In terms of domain architecture, SH2 spans 245–343; that stretch reads WYNKSISRDK…GLVTRLRYPV (99 aa). The region spanning 368–620 is the Protein kinase domain; the sequence is LTFVQEIGSG…SQLLSQLAEI (253 aa). Residues 374-382 and Lys-396 contribute to the ATP site; that span reads IGSGQFGLV. Catalysis depends on Asp-487, which acts as the Proton acceptor. Tyr-517 is modified (phosphotyrosine; by LCK). Phosphoserine is present on Ser-570.

The protein belongs to the protein kinase superfamily. Tyr protein kinase family. TEC subfamily. In terms of assembly, homooligomerizes; this association negatively regulates kinase activity. Interacts with PPIA/CYPA; this interaction regulates TCR signal strength via a proline-directed conformational switch in ITK. Interacts with THEMIS. Interacts with FASLG. Interacts with VAV1; this interaction is important for VAV1 localization and TCR-induced actin polarization. Interacts with TBX21. Zn(2+) serves as cofactor. Post-translationally, phosphorylated at Tyr-517 in the activation loop of the kinase domain by LCK. Subsequent autophosphorylation at Tyr-186 leads to the kinase activation. The autophosphorylated Tyr-186 lies within the substrate binding sequence of the SH3 domain. In terms of processing, ubiquitinated. As to expression, is detected in the thymus, lymph node and very faintly in the spleen, but is not detected in the liver, lung, kidney, heart, brain, intestine or testis. Expressed in T-lymphocytes and mast cells. It may also be expressed in natural killer cells.

The protein resides in the cytoplasm. Its subcellular location is the nucleus. The catalysed reaction is L-tyrosyl-[protein] + ATP = O-phospho-L-tyrosyl-[protein] + ADP + H(+). Tyrosine kinase that plays an essential role in regulation of the adaptive immune response. Regulates the development, function and differentiation of conventional T-cells and nonconventional NKT-cells. When antigen presenting cells (APC) activate T-cell receptor (TCR), a series of phosphorylation lead to the recruitment of ITK to the cell membrane, in the vicinity of the stimulated TCR receptor, where it is phosphorylated by LCK. Phosphorylation leads to ITK autophosphorylation and full activation. Once activated, phosphorylates PLCG1, leading to the activation of this lipase and subsequent cleavage of its substrates. In turn, the endoplasmic reticulum releases calcium in the cytoplasm and the nuclear activator of activated T-cells (NFAT) translocates into the nucleus to perform its transcriptional duty. Phosphorylates 2 essential adapter proteins: the linker for activation of T-cells/LAT protein and LCP2. Then, a large number of signaling molecules such as VAV1 are recruited and ultimately lead to lymphokine production, T-cell proliferation and differentiation. Required for TCR-mediated calcium response in gamma-delta T-cells, may also be involved in the modulation of the transcriptomic signature in the Vgamma2-positive subset of immature gamma-delta T-cells. Phosphorylates TBX21 at 'Tyr-525' and mediates its interaction with GATA3. This chain is Tyrosine-protein kinase ITK/TSK (Itk), found in Mus musculus (Mouse).